The chain runs to 348 residues: Uroporphyrinogen decarboxylase (348 aa).

Residues 29–33 (RQAGR), Asp-79, Tyr-155, Thr-210, and His-326 each bind substrate.

It belongs to the uroporphyrinogen decarboxylase family. Homodimer.

It is found in the cytoplasm. It carries out the reaction uroporphyrinogen III + 4 H(+) = coproporphyrinogen III + 4 CO2. It participates in porphyrin-containing compound metabolism; protoporphyrin-IX biosynthesis; coproporphyrinogen-III from 5-aminolevulinate: step 4/4. Catalyzes the decarboxylation of four acetate groups of uroporphyrinogen-III to yield coproporphyrinogen-III. The chain is Uroporphyrinogen decarboxylase from Rhodospirillum rubrum (strain ATCC 11170 / ATH 1.1.1 / DSM 467 / LMG 4362 / NCIMB 8255 / S1).